A 238-amino-acid polypeptide reads, in one-letter code: Alpha-tubulin N-acetyltransferase (238 aa).

Positions 1–196 (MEFDFDISQS…NNFVVFEDLF (196 aa)) constitute an N-acetyltransferase domain. Acetyl-CoA contacts are provided by residues 129 to 142 (FYVH…GNGK) and 165 to 174 (SFKFLSFLQK).

Belongs to the acetyltransferase ATAT1 family.

It carries out the reaction L-lysyl-[alpha-tubulin] + acetyl-CoA = N(6)-acetyl-L-lysyl-[alpha-tubulin] + CoA + H(+). In terms of biological role, specifically acetylates 'Lys-40' in alpha-tubulin on the lumenal side of microtubules. Promotes microtubule destabilization and accelerates microtubule dynamics; this activity may be independent of acetylation activity. Acetylates alpha-tubulin with a slow enzymatic rate, due to a catalytic site that is not optimized for acetyl transfer. Enters the microtubule through each end and diffuses quickly throughout the lumen of microtubules. Acetylates only long/old microtubules because of its slow acetylation rate since it does not have time to act on dynamically unstable microtubules before the enzyme is released. This Trichoplax adhaerens (Trichoplax reptans) protein is Alpha-tubulin N-acetyltransferase.